The chain runs to 103 residues: Small ribosomal subunit protein uS10 (103 aa).

It belongs to the universal ribosomal protein uS10 family. As to quaternary structure, part of the 30S ribosomal subunit.

In terms of biological role, involved in the binding of tRNA to the ribosomes. This chain is Small ribosomal subunit protein uS10, found in Ruminiclostridium cellulolyticum (strain ATCC 35319 / DSM 5812 / JCM 6584 / H10) (Clostridium cellulolyticum).